We begin with the raw amino-acid sequence, 175 residues long: NADH-ubiquinone oxidoreductase chain 6 (175 aa).

5 helical membrane passes run 1 to 21, 25 to 45, 47 to 67, 88 to 108, and 149 to 169; these read MMTYIVFILSVIFVVSFVGFS, SPIYGGLVLIVSGGVGCGIIM, FGGSFLGLMVFLIYLGGMLVV, TVMGVFLLGLLMEVMLVLYVL, and YGAWVVIVTGWSLLVGVLVIL.

It belongs to the complex I subunit 6 family. As to quaternary structure, core subunit of respiratory chain NADH dehydrogenase (Complex I) which is composed of 45 different subunits.

Its subcellular location is the mitochondrion inner membrane. The enzyme catalyses a ubiquinone + NADH + 5 H(+)(in) = a ubiquinol + NAD(+) + 4 H(+)(out). Its function is as follows. Core subunit of the mitochondrial membrane respiratory chain NADH dehydrogenase (Complex I) which catalyzes electron transfer from NADH through the respiratory chain, using ubiquinone as an electron acceptor. Essential for the catalytic activity and assembly of complex I. The chain is NADH-ubiquinone oxidoreductase chain 6 (MT-ND6) from Equus caballus (Horse).